Here is a 357-residue protein sequence, read N- to C-terminus: MGNCDSRELAEQTKQSKKINTELAIAKKDDENVIKLLLLGAGESGKSTVLKQMRIIHNSGFSQEESMTKRNVVCANTIQAMGALIEGMRQLRIDFVNRICNAHEKLIRETLSENTEYNPFNDAMYTALSDLWADKGIQSAYGKRELFYLADSAKYFFDSLARINEPNYIPTENDILHTRVPTMGVIEVKFQMKGKVFRVFDVGGQRSQRKKWIHCFDDAKALIYVASLSEYDQVLLEDNTTNRMQESLQLFKQVVNNKYFVNTSVILFLNKVDLFEEKIIIKKRSLTIAFDAYTGPQEDVEAAITFIDSKYRAMADNKDKNIYVHKTCATDTHQVQYVLDAVLDTILSSKLKGCGLF.

A lipid anchor (N-myristoyl glycine) is attached at Gly-2. Residue Cys-4 is the site of S-palmitoyl cysteine attachment. The 326-residue stretch at 32 to 357 (NVIKLLLLGA…SSKLKGCGLF (326 aa)) folds into the G-alpha domain. The segment at 35 to 48 (KLLLLGAGESGKST) is G1 motif. The GTP site is built by Glu-43, Ser-44, Gly-45, Lys-46, Ser-47, Thr-48, Asp-151, Leu-176, Thr-182, Gly-204, Asn-270, Lys-271, Asp-273, and Ala-329. Ser-47 lines the Mg(2+) pocket. The interval 174–182 (DILHTRVPT) is G2 motif. Thr-182 is a binding site for Mg(2+). The segment at 197-206 (FRVFDVGGQR) is G3 motif. Residues 266-273 (ILFLNKVD) are G4 motif. The G5 motif stretch occupies residues 327-332 (TCATDT).

Belongs to the G-alpha family. G(q) subfamily. In terms of assembly, g proteins are composed of 3 units; alpha, beta and gamma. The alpha chain contains the guanine nucleotide binding site. Mg(2+) is required as a cofactor.

Its function is as follows. Guanine nucleotide-binding proteins (G proteins) are involved as modulators or transducers in various transmembrane signaling systems. In Caenorhabditis briggsae, this protein is Guanine nucleotide-binding protein alpha-1 subunit (gpa-1).